An 88-amino-acid polypeptide reads, in one-letter code: MSEELMNRKGRVLTGIVVSDKNDKTIVVRVETLVQHPLLKKYVRRRNKFTAHDPQNECGIGDKVKIIEYRPLSRNKRWHLVSILEKAV.

The protein belongs to the universal ribosomal protein uS17 family. In terms of assembly, part of the 30S ribosomal subunit.

In terms of biological role, one of the primary rRNA binding proteins, it binds specifically to the 5'-end of 16S ribosomal RNA. This is Small ribosomal subunit protein uS17 from Nitratidesulfovibrio vulgaris (strain DSM 19637 / Miyazaki F) (Desulfovibrio vulgaris).